Here is a 51-residue protein sequence, read N- to C-terminus: Large ribosomal subunit protein eL39 (51 aa).

This sequence belongs to the eukaryotic ribosomal protein eL39 family. As to quaternary structure, interacts with IMPACT.

In Gallus gallus (Chicken), this protein is Large ribosomal subunit protein eL39 (RPL39).